We begin with the raw amino-acid sequence, 475 residues long: 3-isopropylmalate dehydratase large subunit (475 aa).

[4Fe-4S] cluster is bound by residues Cys-352, Cys-413, and Cys-416.

The protein belongs to the aconitase/IPM isomerase family. LeuC type 1 subfamily. Heterodimer of LeuC and LeuD. It depends on [4Fe-4S] cluster as a cofactor.

The catalysed reaction is (2R,3S)-3-isopropylmalate = (2S)-2-isopropylmalate. Its pathway is amino-acid biosynthesis; L-leucine biosynthesis; L-leucine from 3-methyl-2-oxobutanoate: step 2/4. Its function is as follows. Catalyzes the isomerization between 2-isopropylmalate and 3-isopropylmalate, via the formation of 2-isopropylmaleate. This is 3-isopropylmalate dehydratase large subunit from Pseudomonas syringae pv. tomato (strain ATCC BAA-871 / DC3000).